The chain runs to 430 residues: Dynactin subunit 2 (430 aa).

2 disordered regions span residues 1–51 (MSEG…IDRS) and 201–228 (SLSSSTTEQNTQQPSNNNTTTNITSSSS). Residues 32 to 44 (SISNLADESSELV) show a composition bias toward polar residues. Coiled-coil stretches lie at residues 241 to 319 (TGEQ…QDET) and 397 to 430 (DDSFKSNLLTIKSNIQQLESRIETLQNRQQQQQQ).

Belongs to the dynactin subunit 2 family. In terms of assembly, subunit of dynactin, a multiprotein complex associated with dynein.

It localises to the cytoplasm. The protein localises to the cytoskeleton. Its subcellular location is the membrane. Its function is as follows. Modulates cytoplasmic dynein binding to an organelle, and plays a role in prometaphase chromosome alignment and spindle organization during mitosis. This Dictyostelium discoideum (Social amoeba) protein is Dynactin subunit 2 (dynB).